Reading from the N-terminus, the 529-residue chain is Peptide chain release factor 3 (529 aa).

The tr-type G domain maps to 11 to 280 (AKRRTFAIIS…GLVAWAPAPM (270 aa)). Residues 20–27 (SHPDAGKT), 88–92 (DTPGH), and 142–145 (NKLD) contribute to the GTP site.

The protein belongs to the TRAFAC class translation factor GTPase superfamily. Classic translation factor GTPase family. PrfC subfamily.

It is found in the cytoplasm. Its function is as follows. Increases the formation of ribosomal termination complexes and stimulates activities of RF-1 and RF-2. It binds guanine nucleotides and has strong preference for UGA stop codons. It may interact directly with the ribosome. The stimulation of RF-1 and RF-2 is significantly reduced by GTP and GDP, but not by GMP. The chain is Peptide chain release factor 3 from Edwardsiella ictaluri (strain 93-146).